A 215-amino-acid chain; its full sequence is Cytokinin riboside 5'-monophosphate phosphoribohydrolase LOG4 (215 aa).

Residues Glu84, 102–103 (RK), 119–125 (GYGTLEE), and Thr131 each bind substrate.

The protein belongs to the LOG family. Expressed in roots and shoots. Detected in root procambium, lateral root primordia, vascular tissues of cotyledons, leaves and stems, shoot apical meristem, axillary buds, young inflorescences, fruit abscission zones and basal part of ovules.

The protein localises to the cytoplasm. The protein resides in the nucleus. The catalysed reaction is N(6)-(dimethylallyl)adenosine 5'-phosphate + H2O = N(6)-dimethylallyladenine + D-ribose 5-phosphate. It carries out the reaction 9-ribosyl-trans-zeatin 5'-phosphate + H2O = trans-zeatin + D-ribose 5-phosphate. Cytokinin-activating enzyme working in the direct activation pathway. Phosphoribohydrolase that converts inactive cytokinin nucleotides to the biologically active free-base forms. The sequence is that of Cytokinin riboside 5'-monophosphate phosphoribohydrolase LOG4 (LOG4) from Arabidopsis thaliana (Mouse-ear cress).